We begin with the raw amino-acid sequence, 165 residues long: NADPH-dependent 7-cyano-7-deazaguanine reductase (165 aa).

Catalysis depends on C56, which acts as the Thioimide intermediate. D63 (proton donor) is an active-site residue. Substrate-binding positions include V78–S80 and H97–E98.

This sequence belongs to the GTP cyclohydrolase I family. QueF type 1 subfamily.

The protein localises to the cytoplasm. The catalysed reaction is 7-aminomethyl-7-carbaguanine + 2 NADP(+) = 7-cyano-7-deazaguanine + 2 NADPH + 3 H(+). It functions in the pathway tRNA modification; tRNA-queuosine biosynthesis. In terms of biological role, catalyzes the NADPH-dependent reduction of 7-cyano-7-deazaguanine (preQ0) to 7-aminomethyl-7-deazaguanine (preQ1). This is NADPH-dependent 7-cyano-7-deazaguanine reductase from Bacillus licheniformis (strain ATCC 14580 / DSM 13 / JCM 2505 / CCUG 7422 / NBRC 12200 / NCIMB 9375 / NCTC 10341 / NRRL NRS-1264 / Gibson 46).